We begin with the raw amino-acid sequence, 420 residues long: Adenylosuccinate synthetase (420 aa).

Residues 12-18 (GDEGKGK) and 40-42 (GHT) each bind GTP. Aspartate 13 acts as the Proton acceptor in catalysis. 2 residues coordinate Mg(2+): aspartate 13 and glycine 40. Residues 13 to 16 (DEGK), 38 to 41 (NAGH), threonine 128, arginine 142, glutamine 221, threonine 236, and arginine 299 each bind IMP. Histidine 41 serves as the catalytic Proton donor. 295-301 (ATTGRPR) is a substrate binding site. Residues arginine 301, 327–329 (KAD), and 399–401 (SYG) each bind GTP.

It belongs to the adenylosuccinate synthetase family. In terms of assembly, homodimer. Requires Mg(2+) as cofactor.

It localises to the cytoplasm. It catalyses the reaction IMP + L-aspartate + GTP = N(6)-(1,2-dicarboxyethyl)-AMP + GDP + phosphate + 2 H(+). It participates in purine metabolism; AMP biosynthesis via de novo pathway; AMP from IMP: step 1/2. Its function is as follows. Plays an important role in the de novo pathway of purine nucleotide biosynthesis. Catalyzes the first committed step in the biosynthesis of AMP from IMP. The polypeptide is Adenylosuccinate synthetase (Petrotoga mobilis (strain DSM 10674 / SJ95)).